We begin with the raw amino-acid sequence, 281 residues long: Probable endonuclease 4 (281 aa).

Residues His-69, His-109, Glu-145, Asp-179, His-182, His-216, Asp-229, His-231, and Glu-261 each coordinate Zn(2+).

This sequence belongs to the AP endonuclease 2 family. Requires Zn(2+) as cofactor.

It catalyses the reaction Endonucleolytic cleavage to 5'-phosphooligonucleotide end-products.. In terms of biological role, endonuclease IV plays a role in DNA repair. It cleaves phosphodiester bonds at apurinic or apyrimidinic (AP) sites, generating a 3'-hydroxyl group and a 5'-terminal sugar phosphate. This Aeromonas salmonicida (strain A449) protein is Probable endonuclease 4.